The following is a 442-amino-acid chain: Transcription factor AP-2-epsilon (442 aa).

Positions 54–59 (YFPPPY) match the PPxY motif motif. A Phosphoserine; by PKA modification is found at Ser-246. An H-S-H (helix-span-helix), dimerization region spans residues 287–417 (RRKAANVTLL…YLLESLKGLD (131 aa)).

This sequence belongs to the AP-2 family. Binds DNA as a dimer. Can form homodimers or heterodimers with other AP-2 family members. Expressed in skin, primary keratinocytes, immortalized keratinocytes, and HeLa cell line.

The protein localises to the nucleus. Its function is as follows. Sequence-specific DNA-binding protein that interacts with inducible viral and cellular enhancer elements to regulate transcription of selected genes. AP-2 factors bind to the consensus sequence 5'-GCCNNNGGC-3' and activate genes involved in a large spectrum of important biological functions including proper eye, face, body wall, limb and neural tube development. They also suppress a number of genes including MCAM/MUC18, C/EBP alpha and MYC. AP-2-epsilon may play a role in the development of the CNS and in cartilage differentiation. The protein is Transcription factor AP-2-epsilon of Homo sapiens (Human).